We begin with the raw amino-acid sequence, 386 residues long: 5-hydroxytryptamine receptor 1B (386 aa).

The tract at residues 1 to 25 (MEEPGARCAPPPPAGSQTQTPSSNL) is disordered. The Extracellular portion of the chain corresponds to 1–42 (MEEPGARCAPPPPAGSQTQTPSSNLSHNCSADSYIYQDSIAL). Residues 16–25 (SQTQTPSSNL) show a composition bias toward polar residues. N-linked (GlcNAc...) asparagine glycosylation is found at asparagine 24 and asparagine 28. The chain crosses the membrane as a helical span at residues 43–68 (PWKVLLVALLALITLATTLSNAFVIA). Residues 69–82 (TVYRTRKLHTPANY) lie on the Cytoplasmic side of the membrane. A helical membrane pass occupies residues 83-107 (LIASLAVTDLLVSILVMPISTMYTV). Topologically, residues 108–115 (TGRWTLGQ) are extracellular. A helical membrane pass occupies residues 116 to 141 (VVCDFWLSSDITCCTASIMHLCVIAL). A disulfide bridge connects residues cysteine 118 and cysteine 195. 2 residues coordinate ergotamine: aspartate 125 and threonine 130. Positions 142 to 144 (DRY) match the DRY motif; important for ligand-induced conformation changes and signaling motif. Topologically, residues 142 to 161 (DRYWAITDAVEYSAKRTPRR) are cytoplasmic. A helical transmembrane segment spans residues 162–180 (AAVMIALVWVFSISISLPR). Topologically, residues 181–201 (FFWRQAKAEEEVLDCLVNTDH) are extracellular. Position 197 (valine 197) interacts with ergotamine. A helical membrane pass occupies residues 202–225 (VLYTVYSTVGAFYLPTLLLIALYG). Over 226 to 311 (RIYVEARSRI…AARERKATKT (86 aa)) the chain is Cytoplasmic. The interval 253–272 (ISDSPGSTSSVTSINSRVPD) is disordered. Positions 254 to 268 (SDSPGSTSSVTSINS) are enriched in low complexity. The chain crosses the membrane as a helical span at residues 312-333 (LGIILGAFIVCWLPFFIISLVM). The Extracellular portion of the chain corresponds to 334 to 343 (PICKDACWFH). Residues 344–366 (MAIFDFFNWLGYLNSLINPIIYT) form a helical membrane-spanning segment. Residues 361-365 (NPIIY) carry the NPxxY motif; important for ligand-induced conformation changes and signaling motif. Over 367–386 (MPNEDFKQAFHKLIRFKCTG) the chain is Cytoplasmic. Cysteine 384 carries S-palmitoyl cysteine lipidation.

The protein belongs to the G-protein coupled receptor 1 family. Homodimer. Heterodimer with HTR1D. Post-translationally, phosphorylated. Desensitization of the receptor may be mediated by its phosphorylation. In terms of processing, palmitoylated.

Its subcellular location is the cell membrane. In terms of biological role, G-protein coupled receptor for 5-hydroxytryptamine (serotonin). Also functions as a receptor for ergot alkaloid derivatives, various anxiolytic and antidepressant drugs and other psychoactive substances, such as lysergic acid diethylamide (LSD). Ligand binding causes a conformation change that triggers signaling via guanine nucleotide-binding proteins (G proteins) and modulates the activity of downstream effectors, such as adenylate cyclase. HTR1B is coupled to G(i)/G(o) G alpha proteins and mediates inhibitory neurotransmission by inhibiting adenylate cyclase activity. Arrestin family members inhibit signaling via G proteins and mediate activation of alternative signaling pathways. Regulates the release of 5-hydroxytryptamine, dopamine and acetylcholine in the brain, and thereby affects neural activity, nociceptive processing, pain perception, mood and behavior. Besides, plays a role in vasoconstriction of cerebral arteries. The sequence is that of 5-hydroxytryptamine receptor 1B (HTR1B) from Spalax ehrenbergi (Middle East blind mole rat).